Here is a 550-residue protein sequence, read N- to C-terminus: Methionine--tRNA ligase (550 aa).

The 'HIGH' region signature appears at 13–23; it reads PYANGPLHFGH. 4 residues coordinate Zn(2+): Cys-145, Cys-148, Cys-158, and Cys-161. A 'KMSKS' region motif is present at residues 331–335; sequence QFSKS. Lys-334 lines the ATP pocket.

Belongs to the class-I aminoacyl-tRNA synthetase family. MetG type 1 subfamily. In terms of assembly, monomer. Zn(2+) serves as cofactor.

It is found in the cytoplasm. It catalyses the reaction tRNA(Met) + L-methionine + ATP = L-methionyl-tRNA(Met) + AMP + diphosphate. Functionally, is required not only for elongation of protein synthesis but also for the initiation of all mRNA translation through initiator tRNA(fMet) aminoacylation. The chain is Methionine--tRNA ligase from Chlamydia trachomatis serovar A (strain ATCC VR-571B / DSM 19440 / HAR-13).